A 223-amino-acid chain; its full sequence is UPF0441 protein YgiB (223 aa).

Residues 178–195 (TVPKTAMAPKPATTTTVT) show a composition bias toward low complexity. Positions 178–223 (TVPKTAMAPKPATTTTVTRGGFGESVAKQSTLQRSATGTSSRSMGG) are disordered. Polar residues predominate over residues 204–223 (AKQSTLQRSATGTSSRSMGG).

It belongs to the UPF0441 family.

The protein is UPF0441 protein YgiB of Escherichia coli (strain ATCC 8739 / DSM 1576 / NBRC 3972 / NCIMB 8545 / WDCM 00012 / Crooks).